The chain runs to 398 residues: tRNA-specific 2-thiouridylase MnmA (398 aa).

Residues 18–25 and L44 contribute to the ATP site; that span reads AMSGGVDS. C112 acts as the Nucleophile in catalysis. The cysteines at positions 112 and 213 are disulfide-linked. G136 is a binding site for ATP. An interaction with tRNA region spans residues 163-165; the sequence is RDQ. The Cysteine persulfide intermediate role is filled by C213.

Belongs to the MnmA/TRMU family.

Its subcellular location is the cytoplasm. It carries out the reaction S-sulfanyl-L-cysteinyl-[protein] + uridine(34) in tRNA + AH2 + ATP = 2-thiouridine(34) in tRNA + L-cysteinyl-[protein] + A + AMP + diphosphate + H(+). Functionally, catalyzes the 2-thiolation of uridine at the wobble position (U34) of tRNA, leading to the formation of s(2)U34. This is tRNA-specific 2-thiouridylase MnmA from Sinorhizobium fredii (strain NBRC 101917 / NGR234).